The primary structure comprises 745 residues: Cysteine protease atg4 (745 aa).

Low complexity-rich tracts occupy residues 29-42 (QQSY…APQQ), 52-64 (SPTS…SSST), and 194-215 (NNNS…NNNN). 2 disordered regions span residues 29–68 (QQSY…AMGN) and 192–215 (FQNN…NNNN). Catalysis depends on C262, which acts as the Nucleophile. Disordered stretches follow at residues 344-363 (LNRG…KEEE) and 439-480 (QNNN…NGYN). Residues 439–477 (QNNNKNNNNNNPTTTTTTTTTATSSNNNNNQSPPSRVPN) are compositionally biased toward low complexity. Catalysis depends on residues D562 and H564. The segment at 686–745 (HIPYNPNNNQNNNQNNNNNNNKNNNNNTNQQQTPNYPPKLNTYQPDFSSDGEIDDFTMVG) is disordered. The segment covering 688-719 (PYNPNNNQNNNQNNNNNNNKNNNNNTNQQQTP) has biased composition (low complexity). Acidic residues predominate over residues 734–745 (SDGEIDDFTMVG).

This sequence belongs to the peptidase C54 family.

Its subcellular location is the cytoplasm. It catalyses the reaction [protein]-C-terminal L-amino acid-glycyl-phosphatidylethanolamide + H2O = [protein]-C-terminal L-amino acid-glycine + a 1,2-diacyl-sn-glycero-3-phosphoethanolamine. Cysteine protease that plays a key role in autophagy by mediating both proteolytic activation and delipidation of ATG8 family proteins. The protease activity is required for proteolytic activation of ATG8 family proteins: cleaves the C-terminal amino acid of ATG8 proteins to reveal a C-terminal glycine. Exposure of the glycine at the C-terminus is essential for ATG8 proteins conjugation to phosphatidylethanolamine (PE) and insertion to membranes, which is necessary for autophagy. In addition to the protease activity, also mediates delipidation of PE-conjugated ATG8 proteins. The protein is Cysteine protease atg4 (atg4-1) of Dictyostelium discoideum (Social amoeba).